Here is a 366-residue protein sequence, read N- to C-terminus: Cobalt-precorrin-5B C(1)-methyltransferase (366 aa).

It belongs to the CbiD family.

It catalyses the reaction Co-precorrin-5B + S-adenosyl-L-methionine = Co-precorrin-6A + S-adenosyl-L-homocysteine. It functions in the pathway cofactor biosynthesis; adenosylcobalamin biosynthesis; cob(II)yrinate a,c-diamide from sirohydrochlorin (anaerobic route): step 6/10. Functionally, catalyzes the methylation of C-1 in cobalt-precorrin-5B to form cobalt-precorrin-6A. The protein is Cobalt-precorrin-5B C(1)-methyltransferase of Hahella chejuensis (strain KCTC 2396).